The following is a 581-amino-acid chain: Bestrophin-1 (581 aa).

Residues 1-31 are Cytoplasmic-facing; the sequence is MTVTYSSQVANARLGSFSRLLLCWRGSIYKL. Alanine 10 contributes to the Ca(2+) binding site. The helical transmembrane segment at 32–51 threads the bilayer; the sequence is LYGEFLIFLLCYYIIRFIYR. Residues 52–60 are Extracellular-facing; the sequence is MALTDEQQV. Residues 61–82 traverse the membrane as a helical segment; it reads IFEKLTLYCDSYIQLIPISFVL. Topologically, residues 83 to 237 are cytoplasmic; the sequence is GFYVTLVVTR…DWISVPLVYT (155 aa). A helical membrane pass occupies residues 238–255; it reads QVVTVAVYSFFLACLVGR. The Extracellular segment spans residues 256 to 274; sequence QFLNPAKAYPGHEMDLVVP. Residues 275–288 traverse the membrane as a helical segment; the sequence is LFTFLQFFFYAGWL. The Cytoplasmic segment spans residues 289–581; that stretch reads KVAEQLINPF…ALENRDEAHS (293 aa). Positions 293, 296, 301, and 304 each coordinate Ca(2+). A disordered region spans residues 416-440; sequence EGHFHEGHPKNLRGARLDSSDQEDS.

It belongs to the anion channel-forming bestrophin (TC 1.A.46) family. Calcium-sensitive chloride channel subfamily. Interacts with YWHAG; this interaction promotes the ligand-gated L-glutamate channel activity leading to the positive regulation of NMDA glutamate receptor activity through the L-glutamate secretion. Phosphorylated (in vitro). In terms of processing, dephosphorylated (in vitro) by PP2A.

The protein localises to the cell membrane. It localises to the basolateral cell membrane. The catalysed reaction is chloride(in) = chloride(out). It carries out the reaction hydrogencarbonate(in) = hydrogencarbonate(out). It catalyses the reaction 4-aminobutanoate(in) = 4-aminobutanoate(out). The enzyme catalyses L-glutamate(out) = L-glutamate(in). Ligand-gated anion channel that allows the movement of anions across cell membranes when activated by calcium (Ca2+). Allows the movement of chloride and hydrogencarbonate. Found in a partially open conformation leading to significantly smaller chloride movement. Upon F2R/PAR-1 activation, the sequestered calcium is released into the cytosol of astrocytes, leading to the (Ca2+)-dependent release of L-glutamate into the synaptic cleft that targets the neuronal postsynaptic GRIN2A/NMDAR receptor resulting in the synaptic plasticity regulation. Upon activation of the norepinephrine-alpha-1 adrenergic receptor signaling pathway, transports as well D-serine than L-glutamate in a (Ca2+)-dependent manner, leading to activation of adjacent NMDAR receptors and therefore regulates the heterosynaptic long-term depression and metaplasticity during initial memory acquisition. Releases the 4-aminobutanoate neurotransmitter in a (Ca2+)-dependent manner, and participates in its tonic release from cerebellar glial cells. This is Bestrophin-1 from Sus scrofa (Pig).